The chain runs to 561 residues: Long-chain-fatty-acid--CoA ligase (561 aa).

213 to 224 contacts ATP; it reads YTGGTTGVAKGA.

It belongs to the ATP-dependent AMP-binding enzyme family. Requires Mg(2+) as cofactor.

Its subcellular location is the membrane. It catalyses the reaction a long-chain fatty acid + ATP + CoA = a long-chain fatty acyl-CoA + AMP + diphosphate. The protein operates within lipid metabolism; fatty acid beta-oxidation. Its function is as follows. Catalyzes the esterification, concomitant with transport, of exogenous long-chain fatty acids into metabolically active CoA thioesters for subsequent degradation or incorporation into phospholipids. This is Long-chain-fatty-acid--CoA ligase (fadD) from Escherichia coli O157:H7.